Reading from the N-terminus, the 352-residue chain is Peptide chain release factor 1 (352 aa).

Position 233 is an N5-methylglutamine (Gln233). The tract at residues 288-309 (NAKDRKEQVGSGDRSERIRTYN) is disordered. A compositionally biased stretch (basic and acidic residues) spans 289–306 (AKDRKEQVGSGDRSERIR).

It belongs to the prokaryotic/mitochondrial release factor family. Methylated by PrmC. Methylation increases the termination efficiency of RF1.

The protein localises to the cytoplasm. In terms of biological role, peptide chain release factor 1 directs the termination of translation in response to the peptide chain termination codons UAG and UAA. The protein is Peptide chain release factor 1 (prfA) of Helicobacter pylori (strain J99 / ATCC 700824) (Campylobacter pylori J99).